Consider the following 422-residue polypeptide: Kynurenine--oxoglutarate transaminase 1 (422 aa).

Residues glycine 36 and asparagine 185 each contribute to the substrate site. Lysine 247 is subject to N6-(pyridoxal phosphate)lysine. Arginine 398 lines the substrate pocket.

It belongs to the class-I pyridoxal-phosphate-dependent aminotransferase family. Homodimer. Requires pyridoxal 5'-phosphate as cofactor.

The protein resides in the cytoplasm. It is found in the cytosol. It catalyses the reaction L-kynurenine + 2-oxoglutarate = kynurenate + L-glutamate + H2O. The enzyme catalyses 3-phenylpyruvate + L-glutamine = 2-oxoglutaramate + L-phenylalanine. It carries out the reaction an S-substituted L-cysteine + H2O = a thiol + pyruvate + NH4(+). It participates in amino-acid degradation; L-kynurenine degradation; kynurenate from L-kynurenine: step 1/2. With respect to regulation, inhibited by tryptophan, indole-3-pyruvic acid, 3-indolepropionic acid, DL-indole-3-lactic acid, indole-3-acetic acid (IAC), amino-oxyacetate (AOAA), aminooxy-phenylpropionic acid (AOPP) and Tris. Functionally, catalyzes the irreversible transamination of the L-tryptophan metabolite L-kynurenine to form kynurenic acid (KA), an intermediate in the tryptophan catabolic pathway which is also a broad spectrum antagonist of the three ionotropic excitatory amino acid receptors among others. Also metabolizes the cysteine conjugates of certain halogenated alkenes and alkanes to form reactive metabolites. Catalyzes the beta-elimination of S-conjugates and Se-conjugates of L-(seleno)cysteine, resulting in the cleavage of the C-S or C-Se bond. In Homo sapiens (Human), this protein is Kynurenine--oxoglutarate transaminase 1.